A 123-amino-acid polypeptide reads, in one-letter code: 13 kDa major membrane protein (123 aa).

The protein resides in the cell membrane. This is 13 kDa major membrane protein from Francisella tularensis subsp. holarctica (strain LVS).